The chain runs to 260 residues: GDSL esterase/lipase WDL1 (260 aa).

The signal sequence occupies residues 1 to 35 (MLGFAPAPGRPLFVLFGSSIVQFSFSNGGWGAALA). The active-site Nucleophile is Ser18. Asn83 and Asn150 each carry an N-linked (GlcNAc...) asparagine glycan. Residues Asp191 and His194 contribute to the active site.

The protein belongs to the 'GDSL' lipolytic enzyme family. Highly expressed in panicles. Expressed in shoots, mature flowers and seeds.

It is found in the endoplasmic reticulum. Functionally, involved in the organization of leaf cuticle and wax crystals. The protein is GDSL esterase/lipase WDL1 of Oryza sativa subsp. japonica (Rice).